The chain runs to 450 residues: Asparagine--tRNA ligase (450 aa).

The protein belongs to the class-II aminoacyl-tRNA synthetase family. In terms of assembly, homodimer.

Its subcellular location is the cytoplasm. The enzyme catalyses tRNA(Asn) + L-asparagine + ATP = L-asparaginyl-tRNA(Asn) + AMP + diphosphate + H(+). The protein is Asparagine--tRNA ligase of Metamycoplasma arthritidis (strain 158L3-1) (Mycoplasma arthritidis).